The following is a 120-amino-acid chain: Chaperonin GroEL (120 aa).

An ATP-binding site is contributed by Asp-23–Thr-27.

This sequence belongs to the chaperonin (HSP60) family. As to quaternary structure, forms a cylinder of 14 subunits composed of two heptameric rings stacked back-to-back. Interacts with the co-chaperonin GroES.

Its subcellular location is the cytoplasm. The catalysed reaction is ATP + H2O + a folded polypeptide = ADP + phosphate + an unfolded polypeptide.. Functionally, together with its co-chaperonin GroES, plays an essential role in assisting protein folding. The GroEL-GroES system forms a nano-cage that allows encapsulation of the non-native substrate proteins and provides a physical environment optimized to promote and accelerate protein folding. This chain is Chaperonin GroEL, found in Mycolicibacter nonchromogenicus (Mycobacterium nonchromogenicum).